Reading from the N-terminus, the 285-residue chain is OPEP-3 protein (285 aa).

The polypeptide is OPEP-3 protein (OPEP-3) (Orgyia pseudotsugata multicapsid polyhedrosis virus (OpMNPV)).